The chain runs to 263 residues: Interleukin-15 receptor subunit alpha (263 aa).

The first 32 residues, 1-32 (MASPQLRGYGVQAIPVLLLLLLLLLLPLRVTP), serve as a signal peptide directing secretion. Over 33–205 (GTTCPPPVSI…ISPHSSKMTK (173 aa)) the chain is Extracellular. The Sushi domain maps to 34 to 98 (TTCPPPVSIE…WTTPSLKCIR (65 aa)). 2 disulfide bridges follow: C36–C78 and C62–C96. N51 is a glycosylation site (N-linked (GlcNAc...) asparagine). A compositionally biased stretch (low complexity) spans 113-135 (TPKVTSQPESPSPSAKEPEAFSP). A disordered region spans residues 113–178 (TPKVTSQPES…HKSSRAPSLA (66 aa)). Over residues 136–145 (KSDTAMTTET) the composition is skewed to polar residues. Positions 154-169 (TPSQTTSAGTTGTGSH) are enriched in low complexity. A helical transmembrane segment spans residues 206 to 226 (VAISTSVLLVGAGVVMAFLAW). The Cytoplasmic portion of the chain corresponds to 227 to 263 (YIKSRQPSQPCRVEVETMETVPMTVRASSKEDEDTGA).

In terms of assembly, the interleukin-15 receptor IL15R is a heterotrimer of IL15RA, IL2RB and IL2RG. IL15RA also self-associates. Interacts with SYK. Post-translationally, N-glycosylated and O-glycosylated. In terms of processing, a soluble form (sIL-15RA) arises from proteolytic shedding of the membrane-anchored receptor. It also binds IL15 and thus interferes with IL15 binding to the membrane receptor. In terms of tissue distribution, widely expressed.

The protein resides in the membrane. Its subcellular location is the nucleus membrane. It is found in the cell surface. The protein localises to the secreted. It localises to the extracellular space. High-affinity receptor for interleukin-15. Can signal both in cis and trans where IL15R from one subset of cells presents IL15 to neighboring IL2RG-expressing cells. In neutrophils, binds and activates kinase SYK in response to IL15 stimulation. In neutrophils, required for IL15-induced phagocytosis in a SYK-dependent manner. The chain is Interleukin-15 receptor subunit alpha (Il15ra) from Mus musculus (Mouse).